A 324-amino-acid polypeptide reads, in one-letter code: Adenine deaminase (324 aa).

His11, His13, and His189 together coordinate Zn(2+). Residue Glu192 is the Proton donor of the active site. Asp270 contributes to the Zn(2+) binding site. Asp271 contacts substrate.

This sequence belongs to the metallo-dependent hydrolases superfamily. Adenosine and AMP deaminases family. Adenine deaminase type 2 subfamily. Zn(2+) serves as cofactor.

The enzyme catalyses adenine + H2O + H(+) = hypoxanthine + NH4(+). In terms of biological role, catalyzes the hydrolytic deamination of adenine to hypoxanthine. Plays an important role in the purine salvage pathway and in nitrogen catabolism. The polypeptide is Adenine deaminase (Rhizobium meliloti (strain 1021) (Ensifer meliloti)).